Here is a 225-residue protein sequence, read N- to C-terminus: Ribosome maturation factor RimM (225 aa).

The PRC barrel domain occupies 144–225 (ADEFYWVDLI…RIVVDWEADY (82 aa)).

It belongs to the RimM family. In terms of assembly, binds ribosomal protein uS19.

The protein resides in the cytoplasm. Functionally, an accessory protein needed during the final step in the assembly of 30S ribosomal subunit, possibly for assembly of the head region. Essential for efficient processing of 16S rRNA. May be needed both before and after RbfA during the maturation of 16S rRNA. It has affinity for free ribosomal 30S subunits but not for 70S ribosomes. This chain is Ribosome maturation factor RimM, found in Burkholderia orbicola (strain MC0-3).